The following is a 1405-amino-acid chain: DNA-directed RNA polymerase subunit beta' (1405 aa).

Residues cysteine 71, cysteine 73, cysteine 86, and cysteine 89 each contribute to the Zn(2+) site. Positions 462, 464, and 466 each coordinate Mg(2+). 4 residues coordinate Zn(2+): cysteine 810, cysteine 884, cysteine 891, and cysteine 894.

Belongs to the RNA polymerase beta' chain family. As to quaternary structure, the RNAP catalytic core consists of 2 alpha, 1 beta, 1 beta' and 1 omega subunit. When a sigma factor is associated with the core the holoenzyme is formed, which can initiate transcription. The cofactor is Mg(2+). Zn(2+) is required as a cofactor.

It carries out the reaction RNA(n) + a ribonucleoside 5'-triphosphate = RNA(n+1) + diphosphate. DNA-dependent RNA polymerase catalyzes the transcription of DNA into RNA using the four ribonucleoside triphosphates as substrates. The polypeptide is DNA-directed RNA polymerase subunit beta' (Maricaulis maris (strain MCS10) (Caulobacter maris)).